The sequence spans 560 residues: Alpha-keto-acid decarboxylase (560 aa).

Position 61 (Glu61) interacts with thiamine diphosphate. Residues 396-478 are thiamine pyrophosphate binding; it reads TSFYGMADHR…VVVNNDGYTV (83 aa). Mg(2+)-binding residues include Asp446, Asn473, and Gly475.

This sequence belongs to the TPP enzyme family. The cofactor is a metal cation. Thiamine diphosphate serves as cofactor.

Decarboxylates branched-chain and aromatic alpha-keto acids to aldehydes. This Mycobacterium tuberculosis (strain CDC 1551 / Oshkosh) protein is Alpha-keto-acid decarboxylase (kdc).